We begin with the raw amino-acid sequence, 420 residues long: Pyridinium-3,5-bisthiocarboxylic acid mononucleotide nickel insertion protein (420 aa).

The segment at 81-104 (NHEHKHNHHEIKNDEPAHSHEHHH) is disordered. Residues 90–99 (EIKNDEPAHS) show a composition bias toward basic and acidic residues.

It belongs to the LarC family.

It catalyses the reaction Ni(II)-pyridinium-3,5-bisthiocarboxylate mononucleotide = pyridinium-3,5-bisthiocarboxylate mononucleotide + Ni(2+). In terms of biological role, involved in the biosynthesis of a nickel-pincer cofactor ((SCS)Ni(II) pincer complex). Binds Ni(2+), and functions in nickel delivery to pyridinium-3,5-bisthiocarboxylic acid mononucleotide (P2TMN), to form the mature cofactor. Is thus probably required for the activation of nickel-pincer cofactor-dependent enzymes. The protein is Pyridinium-3,5-bisthiocarboxylic acid mononucleotide nickel insertion protein of Clostridium acetobutylicum (strain ATCC 824 / DSM 792 / JCM 1419 / IAM 19013 / LMG 5710 / NBRC 13948 / NRRL B-527 / VKM B-1787 / 2291 / W).